The primary structure comprises 336 residues: tRNA N6-adenosine threonylcarbamoyltransferase (336 aa).

Fe cation contacts are provided by H112 and H116. Residues 136–140 (LVSGG), D169, G182, and N276 each bind substrate. D304 contacts Fe cation.

Belongs to the KAE1 / TsaD family. It depends on Fe(2+) as a cofactor.

It is found in the cytoplasm. The catalysed reaction is L-threonylcarbamoyladenylate + adenosine(37) in tRNA = N(6)-L-threonylcarbamoyladenosine(37) in tRNA + AMP + H(+). Required for the formation of a threonylcarbamoyl group on adenosine at position 37 (t(6)A37) in tRNAs that read codons beginning with adenine. Is involved in the transfer of the threonylcarbamoyl moiety of threonylcarbamoyl-AMP (TC-AMP) to the N6 group of A37, together with TsaE and TsaB. TsaD likely plays a direct catalytic role in this reaction. The protein is tRNA N6-adenosine threonylcarbamoyltransferase of Francisella tularensis subsp. holarctica (strain FTNF002-00 / FTA).